The following is a 918-amino-acid chain: Isoleucine--tRNA ligase (918 aa).

Residues 57 to 67 (PYANGHIHIGT) carry the 'HIGH' region motif. Residue glutamate 552 coordinates L-isoleucyl-5'-AMP. The 'KMSKS' region signature appears at 593–597 (KMSKS). Lysine 596 is a binding site for ATP. Cysteine 886, cysteine 889, cysteine 906, and cysteine 909 together coordinate Zn(2+).

This sequence belongs to the class-I aminoacyl-tRNA synthetase family. IleS type 1 subfamily. Monomer. It depends on Zn(2+) as a cofactor.

It is found in the cytoplasm. It catalyses the reaction tRNA(Ile) + L-isoleucine + ATP = L-isoleucyl-tRNA(Ile) + AMP + diphosphate. Catalyzes the attachment of isoleucine to tRNA(Ile). As IleRS can inadvertently accommodate and process structurally similar amino acids such as valine, to avoid such errors it has two additional distinct tRNA(Ile)-dependent editing activities. One activity is designated as 'pretransfer' editing and involves the hydrolysis of activated Val-AMP. The other activity is designated 'posttransfer' editing and involves deacylation of mischarged Val-tRNA(Ile). In Thermotoga neapolitana (strain ATCC 49049 / DSM 4359 / NBRC 107923 / NS-E), this protein is Isoleucine--tRNA ligase.